Here is a 397-residue protein sequence, read N- to C-terminus: Trans-2-enoyl-CoA reductase [NADH] (397 aa).

Residues 53–58 (GCSNGY), 79–80 (FE), 116–117 (DA), and 144–145 (LA) contribute to the NAD(+) site. Position 230 (Tyr-230) interacts with substrate. Tyr-240 (proton donor) is an active-site residue. Residues Lys-249 and 276–278 (LVT) each bind NAD(+).

Belongs to the TER reductase family. As to quaternary structure, monomer.

It catalyses the reaction a 2,3-saturated acyl-CoA + NAD(+) = a (2E)-enoyl-CoA + NADH + H(+). It functions in the pathway lipid metabolism; fatty acid biosynthesis. With respect to regulation, inhibited by lauroyl-CoA. In terms of biological role, involved in the fatty acid synthesis (FAS II). Catalyzes the reduction of the carbon-carbon double bond of crotonyl-CoA to yield butyryl-CoA. In vitro it can also use hexenoyl-CoA and dodecenoyl-CoA as substrates. The protein is Trans-2-enoyl-CoA reductase [NADH] of Treponema denticola (strain ATCC 35405 / DSM 14222 / CIP 103919 / JCM 8153 / KCTC 15104).